The primary structure comprises 1247 residues: Catenin delta-2 (1247 aa).

Disordered stretches follow at residues 1–50, 134–238, and 256–309; these read MFAR…TTSA, SGIL…SAFH, and LPAP…KSYS. Position 7 is a phosphoserine (S7). Residues 22-50 show a composition bias toward polar residues; sequence PSASEKNSSLSPGLNTSNGDGSETETTSA. Positions 49-84 form a coiled coil; sequence SAILASVKEQELQFERLTRELEAERQIVASQLERCK. Low complexity predominate over residues 149–160; the sequence is SLLSQSALQLNS. Residues 172 to 207 are compositionally biased toward polar residues; that stretch reads YHSNQTLALGDTAPSQLPARSTQARAAGQSFSQGTT. R209 bears the Omega-N-methylarginine mark. Over residues 218-228 the composition is skewed to pro residues; it reads PAPPPPPPREP. Omega-N-methylarginine is present on R261. A phosphoserine mark is found at S264 and S273. Polar residues predominate over residues 265–276; the sequence is PLTTTQGGSPTK. Residues R279 and R293 each carry the omega-N-methylarginine modification. The segment covering 296–309 has biased composition (polar residues); sequence SPKQSPSRLAKSYS. Phosphoserine is present on residues S324, S357, S412, and S458. One copy of the ARM 1 repeat lies at 391–433; it reads GSRASYSSQHGHLAPELRALQSPEHHIDPIYEDRVYQKPPMRS. The segment at 429–480 is disordered; that stretch reads PPMRSLSQSQGDPLPPAHTGTFRTSTAPSSPGVDSVPLQRTGSQHGPQNAAA. The span at 466 to 475 shows a compositional bias: polar residues; that stretch reads LQRTGSQHGP. A Phosphoserine modification is found at S511. Phosphotyrosine is present on Y513. The interval 514-533 is disordered; it reads SKSGPALPPEGTLARSPSID. ARM repeat units follow at residues 537 to 576, 579 to 618, 623 to 663, 679 to 721, 725 to 770, 832 to 872, 904 to 943, and 997 to 1040; these read KDPREFGWRDPELPEVIQMLQHQFPSVQSNAAAYLQHLCF, NKIKAEIRRQGGIQLLVDLLDHRMTEVHRSACGALRNLVY, DDNK…NLSS, LTNA…NVSS, EARR…NLSY, PKGI…NLAA, VYIRAAVRKEKGLPILVELLRIDNDRVVCAVATALRNMAL, and MENA…SMWQ. Disordered regions lie at residues 1064–1131 and 1152–1176; these read TIER…HTSR and APAEDIKQNQVSTQPVPQEPSRKDY. Polar residues predominate over residues 1072-1081; it reads PYSSSRTPSI. Phosphoserine is present on residues S1087 and S1098. A compositionally biased stretch (low complexity) spans 1087–1100; it reads SPNNRSASAPASPR. Over residues 1103–1112 the composition is skewed to basic and acidic residues; the sequence is ISLKERKTDY.

It belongs to the beta-catenin family. Binds to E-cadherin at a juxtamembrane site within the cytoplasmic domain. Binds to PSEN1. Interacts with PDZD2. Interacts (via the extreme C-terminus) with FRMPD2 (via the PDZ 2 domain). Interacts with ZBTB33. Interacts with ARHGEF28. Interacts with CDK5. Interacts with CTNNB1. Interacts with GSK3A and GSK3B. Interacts with DNM2. Interacts with CCDC85B. O-glycosylated. In terms of processing, phosphorylated by CDK5. Phosphorylated by GSK3B. In terms of tissue distribution, expressed in neurons and glial cells. Isoform 2 was found to be the most predominant isoform in various brain regions. Expressed at neuromuscular junctions.

It localises to the nucleus. Its subcellular location is the cell junction. The protein localises to the adherens junction. It is found in the cell projection. The protein resides in the dendrite. It localises to the perikaryon. Its function is as follows. Has a critical role in neuronal development, particularly in the formation and/or maintenance of dendritic spines and synapses. Involved in the regulation of canonical Wnt signaling. It probably acts on beta-catenin turnover, facilitating beta-catenin interaction with GSK3B, phosphorylation, ubiquitination and degradation. May be involved in neuronal cell adhesion and tissue morphogenesis and integrity by regulating adhesion molecules. Functions as a transcriptional activator when bound to ZBTB33. This chain is Catenin delta-2 (Ctnnd2), found in Mus musculus (Mouse).